A 528-amino-acid chain; its full sequence is 4-chlorobenzoate--CoA ligase (528 aa).

Residues 161-169 (TSGTTGLPK), 300-305 (NIYGTT), and asparagine 409 contribute to the ATP site.

This sequence belongs to the ATP-dependent AMP-binding enzyme family. Homodimer. It depends on Mg(2+) as a cofactor.

It carries out the reaction 4-chlorobenzoate + ATP + CoA = 4-chlorobenzoyl-CoA + AMP + diphosphate. It functions in the pathway xenobiotic degradation; 4-chlorobenzoate degradation; 4-hydroxybenzoate from 4-chlorobenzoate: step 2/3. With respect to regulation, unaffected by 5,5'-dithiobis-(2-nitrobenzoic acid), 4-chloromercuribenzoate and sodium azide. Inhibited by Cu(2+), Fe(2+) and Zn(2+). Unaffected by Na(+), K(+) and Li(+). In terms of biological role, catalyzes the formation of chlorobenzoyl-CoA via a 2 step reaction. First 4-chlorobenzoyl is adenylated by ATP, followed by acyl transfer from the 4-chlorobenzoyl-AMP intermediate to CoA. Benzoate, 4-bromobenzoate, 4-iodobenzoate and 4-methylbenzoate also act as substrates. Inactive towards 4-aminobenzoate, 4-hydroxybenzoate, 2-aminobenzoate, 2,3-dihydroxybenzoate, 4-coumarate and the aliphatic carboxylic acids palmate, caproate, laurate and butyrate. Negligible activity is detected when ATP is replaced by UTP, CTP or GTP as cosubstrate. The chain is 4-chlorobenzoate--CoA ligase from Pseudomonas sp. (strain CBS-3).